We begin with the raw amino-acid sequence, 84 residues long: Small ribosomal subunit protein bS20 (84 aa).

This sequence belongs to the bacterial ribosomal protein bS20 family.

Functionally, binds directly to 16S ribosomal RNA. This is Small ribosomal subunit protein bS20 from Lactiplantibacillus plantarum (strain ATCC BAA-793 / NCIMB 8826 / WCFS1) (Lactobacillus plantarum).